Here is a 350-residue protein sequence, read N- to C-terminus: Probable lactoylglutathione lyase, chloroplastic (350 aa).

The transit peptide at 1–61 (MVRIIPMAAS…KLLRRSVNCL (61 aa)) directs the protein to the chloroplast. VOC domains are found at residues 88–212 (RMLH…LLER) and 218–342 (PLCQ…FVDN). His91 lines the Zn(2+) pocket. Position 95 (Arg95) interacts with substrate. Glu142 serves as a coordination point for Zn(2+). 2 residues coordinate substrate: Asn146 and His160. Zn(2+) contacts are provided by His160 and Glu208. Glu208 serves as the catalytic Proton donor/acceptor.

The protein belongs to the glyoxalase I family. The cofactor is Zn(2+).

The protein resides in the plastid. It localises to the chloroplast stroma. It catalyses the reaction (R)-S-lactoylglutathione = methylglyoxal + glutathione. Its pathway is secondary metabolite metabolism; methylglyoxal degradation; (R)-lactate from methylglyoxal: step 1/2. Its function is as follows. Catalyzes the conversion of hemimercaptal, formed from methylglyoxal and glutathione, to S-lactoylglutathione. The polypeptide is Probable lactoylglutathione lyase, chloroplastic (Arabidopsis thaliana (Mouse-ear cress)).